The sequence spans 203 residues: Urease accessory protein UreG (203 aa).

14 to 21 lines the GTP pocket; it reads GPVGAGKT.

The protein belongs to the SIMIBI class G3E GTPase family. UreG subfamily. In terms of assembly, homodimer. UreD, UreF and UreG form a complex that acts as a GTP-hydrolysis-dependent molecular chaperone, activating the urease apoprotein by helping to assemble the nickel containing metallocenter of UreC. The UreE protein probably delivers the nickel.

The protein resides in the cytoplasm. Facilitates the functional incorporation of the urease nickel metallocenter. This process requires GTP hydrolysis, probably effectuated by UreG. The polypeptide is Urease accessory protein UreG (Jannaschia sp. (strain CCS1)).